The following is a 292-amino-acid chain: Ferric aerobactin-binding protein VatD (292 aa).

The N-terminal stretch at 1–12 is a signal peptide; that stretch reads MLSAALAFNSYA. Residues 30 to 292 form the Fe/B12 periplasmic-binding domain; sequence KVVALDWVLT…HITGRLTQPQ (263 aa). W61, R77, Y118, R185, W213, F215, W269, and F271 together coordinate desferrioxamine B.

It belongs to the bacterial solute-binding protein 8 family. The complex is composed of two ATP-binding proteins (VatC), two transmembrane proteins (VatB) and a solute-binding protein (VatD).

The protein localises to the periplasm. In terms of biological role, part of the ABC transporter complex VatCDB involved in the import of iron(3+)-complexed aerobactin, a citrate-hydroxamate siderophore produced by other bacteria. Binds the iron(3+)-aerobactin complex and transfers it to the membrane-bound permease. Functions in the import of iron(3+)-complexed vulnibactin, a catecholate siderophore synthesized by V.vulnificus, in the absence of FatB. This is Ferric aerobactin-binding protein VatD from Vibrio vulnificus.